A 69-amino-acid polypeptide reads, in one-letter code: Large ribosomal subunit protein bL31 (69 aa).

Residues Cys-17, Cys-19, Cys-37, and Cys-40 each coordinate Zn(2+).

This sequence belongs to the bacterial ribosomal protein bL31 family. Type A subfamily. As to quaternary structure, part of the 50S ribosomal subunit. Requires Zn(2+) as cofactor.

In terms of biological role, binds the 23S rRNA. The protein is Large ribosomal subunit protein bL31 of Thermoanaerobacter pseudethanolicus (strain ATCC 33223 / 39E) (Clostridium thermohydrosulfuricum).